Consider the following 125-residue polypeptide: Protein ApaG (125 aa).

The ApaG domain occupies 1–125; that stretch reads MINSPRVCVQ…FRLAVPTLIH (125 aa).

The sequence is that of Protein ApaG from Klebsiella pneumoniae (strain 342).